The sequence spans 302 residues: Recombination-associated protein RdgC (302 aa).

This sequence belongs to the RdgC family.

The protein localises to the cytoplasm. The protein resides in the nucleoid. In terms of biological role, may be involved in recombination. The protein is Recombination-associated protein RdgC of Mannheimia succiniciproducens (strain KCTC 0769BP / MBEL55E).